The primary structure comprises 340 residues: Glycerol-3-phosphate dehydrogenase [NAD(P)+] (340 aa).

NADPH is bound by residues serine 14, phenylalanine 15, arginine 35, and lysine 108. 2 residues coordinate sn-glycerol 3-phosphate: lysine 108 and glycine 136. Position 140 (alanine 140) interacts with NADPH. Residues lysine 191, aspartate 244, serine 254, arginine 255, and asparagine 256 each contribute to the sn-glycerol 3-phosphate site. Lysine 191 functions as the Proton acceptor in the catalytic mechanism. Arginine 255 contacts NADPH. Residue glutamate 281 coordinates NADPH.

The protein belongs to the NAD-dependent glycerol-3-phosphate dehydrogenase family.

It localises to the cytoplasm. It catalyses the reaction sn-glycerol 3-phosphate + NAD(+) = dihydroxyacetone phosphate + NADH + H(+). The catalysed reaction is sn-glycerol 3-phosphate + NADP(+) = dihydroxyacetone phosphate + NADPH + H(+). It functions in the pathway membrane lipid metabolism; glycerophospholipid metabolism. In terms of biological role, catalyzes the reduction of the glycolytic intermediate dihydroxyacetone phosphate (DHAP) to sn-glycerol 3-phosphate (G3P), the key precursor for phospholipid synthesis. This Pseudomonas paraeruginosa (strain DSM 24068 / PA7) (Pseudomonas aeruginosa (strain PA7)) protein is Glycerol-3-phosphate dehydrogenase [NAD(P)+].